The primary structure comprises 37 residues: Large ribosomal subunit protein bL36 (37 aa).

Belongs to the bacterial ribosomal protein bL36 family.

This is Large ribosomal subunit protein bL36 from Shewanella woodyi (strain ATCC 51908 / MS32).